The following is a 149-amino-acid chain: Probable glycine cleavage system H protein 2 (149 aa).

A Lipoyl-binding domain is found at 32 to 114 (IAVVGITDLA…YGQGWIAKIK (83 aa)). At Lys-73 the chain carries N6-lipoyllysine.

The protein belongs to the GcvH family. As to quaternary structure, the glycine cleavage system is composed of four proteins: P, T, L and H. Requires (R)-lipoate as cofactor.

The glycine cleavage system catalyzes the degradation of glycine. The H protein shuttles the methylamine group of glycine from the P protein to the T protein. In Sulfolobus acidocaldarius (strain ATCC 33909 / DSM 639 / JCM 8929 / NBRC 15157 / NCIMB 11770), this protein is Probable glycine cleavage system H protein 2.